Reading from the N-terminus, the 189-residue chain is UPF0312 protein VC_A0539 (189 aa).

Residues 1 to 22 (MKKTLMAVGLAAVMSIPFAANA) form the signal peptide.

Belongs to the UPF0312 family. Type 1 subfamily.

The protein resides in the periplasm. The chain is UPF0312 protein VC_A0539 from Vibrio cholerae serotype O1 (strain ATCC 39315 / El Tor Inaba N16961).